The following is a 99-amino-acid chain: Putative transmembrane protein ORF13 (99 aa).

A run of 3 helical transmembrane segments spans residues 8-28, 42-62, and 73-93; these read IATF…MAGI, LGLF…YIIV, and GPIT…AIIA.

It localises to the host membrane. This chain is Putative transmembrane protein ORF13, found in His1 virus (isolate Australia/Victoria) (His1V).